The primary structure comprises 380 residues: MAPNPRKSHPLLKMINNSLIDLPTPPNISAWWNFGSLLALCLVTQILTGLLLAMHYTADTTLAFSSVAHTCRNVQYGWLIRNMHANGASFFFICIYMHIGRGFYYGSYLHKETWNTGVLLLLTLMATAFVGYVLPWGQMSFWGATVITNMFSAIPYIGQTIVEWAWGGFSVDNPTLTRFFALHFLLPFMIAGLTLIHLTFLHESGSNNPLGIVSNCDKIPFHPYYSLKDILGLALLLLPLTAMALFSPNLLGDPENFTPANPLVTPPHIKPEWYFLFAYAILRSIPNKLGGVLALAASVLVLLLCPFLHTSKQRTMAFRPLSQSLFWILVANLLILTWIGSQPVEHPFIIIGQLASTTYFIILLILFPITSALENKMLNF.

The next 4 membrane-spanning stretches (helical) occupy residues 34–54 (FGSLLALCLVTQILTGLLLAM), 78–99 (WLIRNMHANGASFFFICIYMHI), 114–134 (WNTGVLLLLTLMATAFVGYVL), and 179–199 (FFALHFLLPFMIAGLTLIHLT). Residues His-84 and His-98 each coordinate heme b. Heme b contacts are provided by His-183 and His-197. Residue His-202 coordinates a ubiquinone. 4 consecutive transmembrane segments (helical) span residues 227–247 (LKDILGLALLLLPLTAMALFS), 289–309 (LGGVLALAASVLVLLLCPFLH), 321–341 (LSQSLFWILVANLLILTWIGS), and 348–368 (FIIIGQLASTTYFIILLILFP).

This sequence belongs to the cytochrome b family. In terms of assembly, the cytochrome bc1 complex contains 11 subunits: 3 respiratory subunits (MT-CYB, CYC1 and UQCRFS1), 2 core proteins (UQCRC1 and UQCRC2) and 6 low-molecular weight proteins (UQCRH/QCR6, UQCRB/QCR7, UQCRQ/QCR8, UQCR10/QCR9, UQCR11/QCR10 and a cleavage product of UQCRFS1). This cytochrome bc1 complex then forms a dimer. Requires heme b as cofactor.

It localises to the mitochondrion inner membrane. In terms of biological role, component of the ubiquinol-cytochrome c reductase complex (complex III or cytochrome b-c1 complex) that is part of the mitochondrial respiratory chain. The b-c1 complex mediates electron transfer from ubiquinol to cytochrome c. Contributes to the generation of a proton gradient across the mitochondrial membrane that is then used for ATP synthesis. This is Cytochrome b (MT-CYB) from Oceanodroma tristrami (Tristram's storm-petrel).